The following is a 247-amino-acid chain: tRNA pseudouridine synthase A (247 aa).

The active-site Nucleophile is the Asp-52. Tyr-113 contributes to the substrate binding site.

Belongs to the tRNA pseudouridine synthase TruA family. As to quaternary structure, homodimer.

The enzyme catalyses uridine(38/39/40) in tRNA = pseudouridine(38/39/40) in tRNA. Formation of pseudouridine at positions 38, 39 and 40 in the anticodon stem and loop of transfer RNAs. This is tRNA pseudouridine synthase A from Bartonella henselae (strain ATCC 49882 / DSM 28221 / CCUG 30454 / Houston 1) (Rochalimaea henselae).